The sequence spans 349 residues: MNKYIKQGAPILGILLAVMFGGREGDATTKTNTTEKTTNPITLKVSYAGSLSVPFEQYEKIYKKYHNNMGVQREAGGSVDCIEKIIYLNDTADVLASADYSLISTMMMPEYADWYLMNARNEIVIAYTDKSNYKDEINSDNWYNILNKPNVKFGFTSPNKDPCGYRSLMTIQLAELHYNIPTIFNDLALKNTNFGVEKENGTNTIIIPKEIKDINTDKIFLRNTESEVLEPLKTGVYDYLFIYKSVADQHNLKYIELPKEINLGYHEYADNYKKVKLTTGDGKTKTAKPIIYGITVPKTAKHQKEGIEFVKTILEHPEVFENAGQPVIEPAVGFGNIPDELKEFVEIRK.

The N-terminal stretch at 1 to 25 is a signal peptide; it reads MNKYIKQGAPILGILLAVMFGGREG.

Belongs to the bacterial solute-binding protein 1 family. WtpA subfamily.

This is an uncharacterized protein from Methanococcus aeolicus (strain ATCC BAA-1280 / DSM 17508 / OCM 812 / Nankai-3).